The chain runs to 283 residues: Protein boule-like (283 aa).

Positions 1–25 are disordered; the sequence is MQTDSLSPSPNPVSPVPLNNPTSAP. The 78-residue stretch at 33 to 110 folds into the RRM domain; that stretch reads NRIFVGGIDF…KKLNIGPAIR (78 aa). The 25-residue stretch at 160-184 folds into the DAZ domain; sequence PSRSVCSSPVMVAQPIYQQPAYHYQ.

It belongs to the RRM DAZ family. Interacts with DAZ1 and DAZL.

It localises to the cytoplasm. Its function is as follows. Probable RNA-binding protein, which may be required during spermatogenesis. May act by binding to the 3'-UTR of mRNAs and regulating their translation. This chain is Protein boule-like (BOLL), found in Macaca fascicularis (Crab-eating macaque).